The chain runs to 158 residues: Cyclic pyranopterin monophosphate synthase (158 aa).

Substrate contacts are provided by residues 76-78 (LCH) and 114-115 (ME). Aspartate 129 is a catalytic residue.

This sequence belongs to the MoaC family. In terms of assembly, homohexamer; trimer of dimers.

The enzyme catalyses (8S)-3',8-cyclo-7,8-dihydroguanosine 5'-triphosphate = cyclic pyranopterin phosphate + diphosphate. It participates in cofactor biosynthesis; molybdopterin biosynthesis. In terms of biological role, catalyzes the conversion of (8S)-3',8-cyclo-7,8-dihydroguanosine 5'-triphosphate to cyclic pyranopterin monophosphate (cPMP). This chain is Cyclic pyranopterin monophosphate synthase, found in Shewanella loihica (strain ATCC BAA-1088 / PV-4).